Consider the following 97-residue polypeptide: DNA-binding protein NEQ150 (97 aa).

It belongs to the PDCD5 family.

This is DNA-binding protein NEQ150 from Nanoarchaeum equitans (strain Kin4-M).